The primary structure comprises 311 residues: tRNA-cytidine(32) 2-sulfurtransferase (311 aa).

The short motif at 47 to 52 (SGGKDS) is the PP-loop motif element. Residues C122, C125, and C213 each contribute to the [4Fe-4S] cluster site.

Belongs to the TtcA family. In terms of assembly, homodimer. Mg(2+) is required as a cofactor. The cofactor is [4Fe-4S] cluster.

The protein localises to the cytoplasm. It carries out the reaction cytidine(32) in tRNA + S-sulfanyl-L-cysteinyl-[cysteine desulfurase] + AH2 + ATP = 2-thiocytidine(32) in tRNA + L-cysteinyl-[cysteine desulfurase] + A + AMP + diphosphate + H(+). The protein operates within tRNA modification. Catalyzes the ATP-dependent 2-thiolation of cytidine in position 32 of tRNA, to form 2-thiocytidine (s(2)C32). The sulfur atoms are provided by the cysteine/cysteine desulfurase (IscS) system. This Enterobacter sp. (strain 638) protein is tRNA-cytidine(32) 2-sulfurtransferase.